The chain runs to 458 residues: tRNA modification GTPase MnmE (458 aa).

Residues Arg26, Glu88, and Arg127 each coordinate (6S)-5-formyl-5,6,7,8-tetrahydrofolate. The TrmE-type G domain maps to 224 to 378 (GLSTAIIGRP…IEERINDIFF (155 aa)). Asn234 provides a ligand contact to K(+). GTP contacts are provided by residues 234-239 (NVGKSS), 253-259 (TDIEGTT), and 278-281 (DTAG). Ser238 serves as a coordination point for Mg(2+). Thr253, Ile255, and Thr258 together coordinate K(+). Residue Thr259 participates in Mg(2+) binding. Lys458 lines the (6S)-5-formyl-5,6,7,8-tetrahydrofolate pocket.

This sequence belongs to the TRAFAC class TrmE-Era-EngA-EngB-Septin-like GTPase superfamily. TrmE GTPase family. As to quaternary structure, homodimer. Heterotetramer of two MnmE and two MnmG subunits. It depends on K(+) as a cofactor.

It is found in the cytoplasm. Functionally, exhibits a very high intrinsic GTPase hydrolysis rate. Involved in the addition of a carboxymethylaminomethyl (cmnm) group at the wobble position (U34) of certain tRNAs, forming tRNA-cmnm(5)s(2)U34. This chain is tRNA modification GTPase MnmE, found in Streptococcus agalactiae serotype Ia (strain ATCC 27591 / A909 / CDC SS700).